The sequence spans 243 residues: Probable transcriptional regulatory protein Athe_0816 (243 aa).

This sequence belongs to the TACO1 family.

It is found in the cytoplasm. This Caldicellulosiruptor bescii (strain ATCC BAA-1888 / DSM 6725 / KCTC 15123 / Z-1320) (Anaerocellum thermophilum) protein is Probable transcriptional regulatory protein Athe_0816.